The chain runs to 117 residues: Large ribosomal subunit protein uL18 (117 aa).

Belongs to the universal ribosomal protein uL18 family. Part of the 50S ribosomal subunit; part of the 5S rRNA/L5/L18/L25 subcomplex. Contacts the 5S and 23S rRNAs.

Its function is as follows. This is one of the proteins that bind and probably mediate the attachment of the 5S RNA into the large ribosomal subunit, where it forms part of the central protuberance. The sequence is that of Large ribosomal subunit protein uL18 from Proteus mirabilis (strain HI4320).